Consider the following 157-residue polypeptide: Ribonuclease H (157 aa).

The RNase H type-1 domain occupies 4 to 146 (KRTEITIYTD…CDKLAVKASQ (143 aa)). Mg(2+) is bound by residues Asp13, Glu51, Asp73, and Asp138.

This sequence belongs to the RNase H family. Monomer. It depends on Mg(2+) as a cofactor.

The protein localises to the cytoplasm. It carries out the reaction Endonucleolytic cleavage to 5'-phosphomonoester.. Its function is as follows. Endonuclease that specifically degrades the RNA of RNA-DNA hybrids. This Trichodesmium erythraeum (strain IMS101) protein is Ribonuclease H.